The primary structure comprises 137 residues: Protein yippee-like F37A8.5 (137 aa).

The disordered stretch occupies residues 1–20; it reads MHFRMKVLENSSKHNTPKKQ. A Yippee domain is found at 32–129; that stretch reads RCYSCIHCRA…IELAHMVKDN (98 aa). Zn(2+) contacts are provided by cysteine 36, cysteine 39, cysteine 92, and cysteine 95.

This sequence belongs to the yippee family.

In Caenorhabditis elegans, this protein is Protein yippee-like F37A8.5.